Reading from the N-terminus, the 570-residue chain is MRFCNSKLTSIDNRCDVAIISKDEERFEVKLVESEIARELNRLGALSPRSMQKNILVPFTTQTVKYLLGLEKVSDSTDEMGWFGIEKSLEEIAGFGQHCFPKILEMKNTICDHILSTLSDVNCFLLHKKFREFDCQNHAHKTLEYILYNLARMVVVDKRVDVEFYRLPVEEVKHLLSSEEVNVEQETQIIEVINQWIAADFENRDKFRPMLMSTVRFLALDQQIAKSLSQFHPSLKPARRTRDVLIIIGGWLHRQACDRIEWFDPENNCWKVSQQKLPTTLAYHGSAIVDGILYLFGGSTGQRTRCETWKLSTETWQWDRCNNMMEPRNYISNSSVVYDGRIYVFGGQNFREITRTAVRSRTGEVFDPKTNKWTETASLSDMRSDCAAEVFENQIYVSGGFNGDMILASVEVYNPIGNVFSRTVDLPYPITGHCLLNHGNQLLIVGGFDGAERQNKIWMWHRTGEWQQRPEKLIYGRSTSAACSYKGWLFSVAGYTEKVEATCEILLPEPNASRFSFIPDVPRAKSALNVLVAPNWRNFLERRGTINEQSMEMDDDYEDDAGASYMSINN.

Kelch repeat units follow at residues 244 to 291 (VLII…IVDG), 293 to 338 (LYLF…SVVY), 341 to 393 (RIYV…VFEN), 395 to 440 (IYVS…NHGN), 442 to 487 (LLIV…SYKG), and 489 to 535 (LFSV…VAPN).

In terms of tissue distribution, testis, in both spermatogonial cells and spermatocytes.

It localises to the cytoplasm. Its subcellular location is the cytoskeleton. In terms of biological role, may play a role in the spermatocyte cytoskeleton, possibly interacting with actin. The protein is Spermatocyte protein spe-26 (spe-26) of Caenorhabditis elegans.